Reading from the N-terminus, the 95-residue chain is Small ribosomal subunit protein bS6 (95 aa).

It belongs to the bacterial ribosomal protein bS6 family.

Its function is as follows. Binds together with bS18 to 16S ribosomal RNA. In Clostridium novyi (strain NT), this protein is Small ribosomal subunit protein bS6.